The chain runs to 361 residues: Phospho-N-acetylmuramoyl-pentapeptide-transferase (361 aa).

Transmembrane regions (helical) follow at residues 27-47, 72-92, 94-114, 133-153, 169-189, 200-220, 240-260, 264-284, 289-309, and 338-358; these read GAMV…IDHL, TPTM…LLWA, LHNP…FVGF, LRLA…IWAG, FAIN…VGAG, GLAI…AYLV, LAVL…FNAP, IFMG…IAVA, IVLA…IVQV, and QIVI…LSTL.

This sequence belongs to the glycosyltransferase 4 family. MraY subfamily. Mg(2+) is required as a cofactor.

It is found in the cell inner membrane. It carries out the reaction UDP-N-acetyl-alpha-D-muramoyl-L-alanyl-gamma-D-glutamyl-meso-2,6-diaminopimeloyl-D-alanyl-D-alanine + di-trans,octa-cis-undecaprenyl phosphate = di-trans,octa-cis-undecaprenyl diphospho-N-acetyl-alpha-D-muramoyl-L-alanyl-D-glutamyl-meso-2,6-diaminopimeloyl-D-alanyl-D-alanine + UMP. It participates in cell wall biogenesis; peptidoglycan biosynthesis. Its function is as follows. Catalyzes the initial step of the lipid cycle reactions in the biosynthesis of the cell wall peptidoglycan: transfers peptidoglycan precursor phospho-MurNAc-pentapeptide from UDP-MurNAc-pentapeptide onto the lipid carrier undecaprenyl phosphate, yielding undecaprenyl-pyrophosphoryl-MurNAc-pentapeptide, known as lipid I. In Afipia carboxidovorans (strain ATCC 49405 / DSM 1227 / KCTC 32145 / OM5) (Oligotropha carboxidovorans), this protein is Phospho-N-acetylmuramoyl-pentapeptide-transferase.